An 87-amino-acid polypeptide reads, in one-letter code: UPF0237 protein YjhC (87 aa).

One can recognise an ACT domain in the interval 4 to 76 (VVTVVGADKI…EALGVNIHVQ (73 aa)).

The protein belongs to the UPF0237 family.

The polypeptide is UPF0237 protein YjhC (yjhC) (Lactococcus lactis subsp. lactis (strain IL1403) (Streptococcus lactis)).